Reading from the N-terminus, the 823-residue chain is Endoplasmin homolog (823 aa).

A signal peptide spans methionine 1–glycine 23. Residues asparagine 29–valine 60 form a disordered region. Positions aspartate 39 to glycine 48 are enriched in basic and acidic residues. ATP contacts are provided by residues glutamate 106, asparagine 110, aspartate 154, methionine 159, asparagine 167, lysine 173, serine 174–glycine 175, glutamine 194–phenylalanine 199, phenylalanine 199, and threonine 246. Residue asparagine 110 is glycosylated (N-linked (GlcNAc...) asparagine). The disordered stretch occupies residues glutamate 289 to threonine 328. Residues threonine 290–aspartate 321 show a composition bias toward acidic residues. N-linked (GlcNAc...) asparagine glycosylation is found at asparagine 452 and asparagine 620. Over residues valine 777–glutamate 792 the composition is skewed to acidic residues. A disordered region spans residues valine 777 to leucine 823. The Prevents secretion from ER signature appears at lysine 820–leucine 823.

Belongs to the heat shock protein 90 family. Interacts with FKBP42. Interacts with P23-1. As to expression, ubiquitous.

Its subcellular location is the endoplasmic reticulum lumen. In terms of biological role, may have a molecular chaperone role in the processing of secreted materials. Required for shoot apical meristem (SAM), root apical meristem (RAM) and floral meristem (FM) formation, probably by regulating the folding of CLAVATA proteins (CLVs). Also involved in pollen tube elongation. Involved in resistance to tunicamycin- or high calcium-induced ER stresses. Possesses ATPase activity. The polypeptide is Endoplasmin homolog (Arabidopsis thaliana (Mouse-ear cress)).